Reading from the N-terminus, the 208-residue chain is Ribonuclease HII (208 aa).

Residues methionine 1 to isoleucine 205 form the RNase H type-2 domain. Aspartate 7, glutamate 8, and aspartate 104 together coordinate a divalent metal cation.

The protein belongs to the RNase HII family. Mn(2+) serves as cofactor. The cofactor is Mg(2+).

The protein localises to the cytoplasm. The enzyme catalyses Endonucleolytic cleavage to 5'-phosphomonoester.. Its function is as follows. Endonuclease that specifically degrades the RNA of RNA-DNA hybrids. In Sulfurisphaera tokodaii (strain DSM 16993 / JCM 10545 / NBRC 100140 / 7) (Sulfolobus tokodaii), this protein is Ribonuclease HII.